Here is a 101-residue protein sequence, read N- to C-terminus: Small ubiquitin-related modifier 1 (101 aa).

At Ser2 the chain carries N-acetylserine. Residue Ser2 is modified to Phosphoserine. Lys7 is covalently cross-linked (Glycyl lysine isopeptide (Lys-Gly) (interchain with G-Cter in SUMO1); alternate). Residue Lys7 forms a Glycyl lysine isopeptide (Lys-Gly) (interchain with G-Cter in SUMO2); alternate linkage. Ser9 carries the phosphoserine modification. Glycyl lysine isopeptide (Lys-Gly) (interchain with G-Cter in SUMO2) cross-links involve residues Lys16, Lys17, and Lys23. Residues 20–97 (EYIKLKVIGQ…IEVYHEQTGG (78 aa)) form the Ubiquitin-like domain. A Glycyl lysine isopeptide (Lys-Gly) (interchain with G-Cter in SUMO1) cross-link involves residue Lys25. Phosphoserine is present on Ser32. Residues Lys37, Lys39, Lys45, and Lys46 each participate in a glycyl lysine isopeptide (Lys-Gly) (interchain with G-Cter in SUMO2) cross-link. Residue Gly97 forms a Glycyl lysine isopeptide (Gly-Lys) (interchain with K-? in acceptor proteins) linkage. Residues 98–101 (HSTV) constitute a propeptide that is removed on maturation.

The protein belongs to the ubiquitin family. SUMO subfamily. In terms of assembly, covalently attached to KCNB1; UBE2I increases cross-linking with KCNB1 and PIAS1 decreases cross-links with KCNB1. Interacts with SAE2, RANBP2, PIAS1 and PIAS2. Interacts with PRKN. Covalently attached to a number of proteins such as IKFZ1, PML, RANGAP1, HIPK2, SP100, p53, p73-alpha, MDM2, JUN, DNMT3B and TDG. Also interacts with HIF1A, HIPK2, HIPK3, CHD3, EXOSC9, RAD51 and RAD52. Interacts with USP25 (via ts SIM domain); the interaction weakly sumoylates USP25. Interacts with SIMC1, CASP8AP2, RNF111 and SOBP (via SIM domains). Interacts with BHLHE40/DEC1. Interacts with RWDD3. Interacts with UBE2I/UBC9 and this interaction is enhanced in the presence of RWDD3. Interacts with MTA1. Interacts with SENP2. Interacts with HINT1. Cleavage of precursor form by SENP1, SENP2 is necessary for function. Post-translationally, polymeric SUMO1 chains undergo polyubiquitination by RNF4.

The protein localises to the nucleus membrane. Its subcellular location is the nucleus speckle. It localises to the cytoplasm. It is found in the nucleus. The protein resides in the PML body. The protein localises to the cell membrane. Its function is as follows. Ubiquitin-like protein that can be covalently attached to proteins as a monomer or a lysine-linked polymer. Covalent attachment via an isopeptide bond to its substrates requires prior activation by the E1 complex SAE1-SAE2 and linkage to the E2 enzyme UBE2I, and can be promoted by E3 ligases such as PIAS1-4, RANBP2 or CBX4. This post-translational modification on lysine residues of proteins plays a crucial role in a number of cellular processes such as nuclear transport, DNA replication and repair, mitosis and signal transduction. Involved for instance in targeting RANGAP1 to the nuclear pore complex protein RANBP2. Covalently attached to the voltage-gated potassium channel KCNB1; this modulates the gating characteristics of KCNB1. Polymeric SUMO1 chains are also susceptible to polyubiquitination which functions as a signal for proteasomal degradation of modified proteins. May also regulate a network of genes involved in palate development. Covalently attached to ZFHX3. In Cervus nippon (Sika deer), this protein is Small ubiquitin-related modifier 1 (SUMO1).